Consider the following 418-residue polypeptide: Secreted aspartic protease 5 (418 aa).

Positions 1-18 (MFLKNILSVLAFALLIDA) are cleaved as a signal peptide. Residues 19-76 (APVKRSPGFVTLDFNVKRSLVDPDDPTVEAKRSPLFLEFTPSEFPVDETGRDGDVDKR) constitute a propeptide, activation peptide. In terms of domain architecture, Peptidase A1 spans 90–404 (YTADITVGSD…NLDDKKISMA (315 aa)). Asp-108 is a catalytic residue. Position 108–110 (108–110 (DTG)) interacts with pepstatin A. A disulfide bond links Cys-123 and Cys-135. Position 161-162 (161-162 (GD)) interacts with pepstatin A. Glu-268 contacts Zn(2+). Asp-294 is a catalytic residue. 294 to 298 (DSGTT) provides a ligand contact to pepstatin A. Cys-332 and Cys-370 are oxidised to a cystine.

It belongs to the peptidase A1 family.

The protein localises to the secreted. It carries out the reaction Preferential cleavage at the carboxyl of hydrophobic amino acids, but fails to cleave 15-Leu-|-Tyr-16, 16-Tyr-|-Leu-17 and 24-Phe-|-Phe-25 of insulin B chain. Activates trypsinogen, and degrades keratin.. Its activity is regulated as follows. Inhibited by pepstatin A analogs. Secreted aspartic peptidases (SAPs) are a group of ten acidic hydrolases considered as key virulence factors. These enzymes supply the fungus with nutrient amino acids as well as are able to degrade the selected host's proteins involved in the immune defense. Moreover, acts toward human hemoglobin though limited proteolysis to generate a variety of antimicrobial hemocidins, enabling to compete with the other microorganisms of the same physiological niche using the microbicidal peptides generated from the host protein. This Candida albicans (strain SC5314 / ATCC MYA-2876) (Yeast) protein is Secreted aspartic protease 5.